Reading from the N-terminus, the 195-residue chain is Large ribosomal subunit protein eL15 (195 aa).

The tract at residues 174 to 195 (GHGRLGSAKSRPSIRANGRLRR) is disordered.

It belongs to the eukaryotic ribosomal protein eL15 family.

The protein is Large ribosomal subunit protein eL15 of Picrophilus torridus (strain ATCC 700027 / DSM 9790 / JCM 10055 / NBRC 100828 / KAW 2/3).